The sequence spans 314 residues: Testisin (314 aa).

The signal sequence occupies residues 1–19 (MGARGALLLALLLARAGLR). The propeptide occupies 20-41 (KPESQEAAPLSGPCGRRVITSR). 2 disulfide bridges follow: Cys-33–Cys-157 and Cys-67–Cys-83. The Peptidase S1 domain maps to 42-286 (IVGGEDAELG…HFEWIQKLMA (245 aa)). Residues His-82 and Asp-137 each act as charge relay system in the active site. Residues Asn-167 and Asn-200 are each glycosylated (N-linked (GlcNAc...) asparagine). Disulfide bonds link Cys-171–Cys-244, Cys-204–Cys-223, and Cys-234–Cys-262. Ser-238 serves as the catalytic Charge relay system. A glycan (N-linked (GlcNAc...) asparagine) is linked at Asn-273. Ser-288 carries GPI-anchor amidated serine lipidation. The propeptide at 289–314 (GMSQPDPSWPLLFFPLLWALPLLGPV) is removed in mature form.

It belongs to the peptidase S1 family. As to expression, expressed predominantly in premeiotic testicular germ cells, mostly late pachytene and diplotene spermatocytes.

Its subcellular location is the cell membrane. Its function is as follows. Could regulate proteolytic events associated with testicular germ cell maturation. The sequence is that of Testisin (PRSS21) from Homo sapiens (Human).